Here is a 330-residue protein sequence, read N- to C-terminus: Ribosomal RNA small subunit methyltransferase H (330 aa).

Residues 40 to 42, D58, F85, D101, and Q108 contribute to the S-adenosyl-L-methionine site; that span reads GGY.

Belongs to the methyltransferase superfamily. RsmH family.

It localises to the cytoplasm. The catalysed reaction is cytidine(1402) in 16S rRNA + S-adenosyl-L-methionine = N(4)-methylcytidine(1402) in 16S rRNA + S-adenosyl-L-homocysteine + H(+). Its function is as follows. Specifically methylates the N4 position of cytidine in position 1402 (C1402) of 16S rRNA. This Roseobacter denitrificans (strain ATCC 33942 / OCh 114) (Erythrobacter sp. (strain OCh 114)) protein is Ribosomal RNA small subunit methyltransferase H.